The primary structure comprises 494 residues: Probable cytosol aminopeptidase (494 aa).

Lys260 and Asp265 together coordinate Mn(2+). Lys272 is a catalytic residue. Residues Asp283, Asp342, and Glu344 each contribute to the Mn(2+) site. Arg346 is a catalytic residue.

The protein belongs to the peptidase M17 family. The cofactor is Mn(2+).

It localises to the cytoplasm. It catalyses the reaction Release of an N-terminal amino acid, Xaa-|-Yaa-, in which Xaa is preferably Leu, but may be other amino acids including Pro although not Arg or Lys, and Yaa may be Pro. Amino acid amides and methyl esters are also readily hydrolyzed, but rates on arylamides are exceedingly low.. The catalysed reaction is Release of an N-terminal amino acid, preferentially leucine, but not glutamic or aspartic acids.. In terms of biological role, presumably involved in the processing and regular turnover of intracellular proteins. Catalyzes the removal of unsubstituted N-terminal amino acids from various peptides. This is Probable cytosol aminopeptidase from Bacillus cereus (strain ATCC 10987 / NRS 248).